The sequence spans 477 residues: Endo-1,4-beta-xylanase A (477 aa).

Positions 1–41 (MGSYALPRSGVRRSIRVLLLALVVGVLGTATALIAPPGAHA) are cleaved as a signal peptide. The GH10 domain maps to 42–340 (AESTLGAAAA…KAAYTAVLDA (299 aa)). The Proton donor role is filled by E169. The active-site Nucleophile is the E277. The Ricin B-type lectin domain occupies 361–477 (SGRCLDVPDA…NGSNQRWTRT (117 aa)). Intrachain disulfides connect C364–C383, C406–C423, and C447–C466.

This sequence belongs to the glycosyl hydrolase 10 (cellulase F) family.

It is found in the secreted. The catalysed reaction is Endohydrolysis of (1-&gt;4)-beta-D-xylosidic linkages in xylans.. Its pathway is glycan degradation; xylan degradation. Its function is as follows. Contributes to hydrolyze hemicellulose, the major component of plant cell-walls. XLNA and XLNB seem to act sequentially on the substrate to yield xylobiose and xylose as carbon sources. The sequence is that of Endo-1,4-beta-xylanase A (xlnA) from Streptomyces lividans.